The sequence spans 462 residues: Histidine--tRNA ligase (462 aa).

The protein belongs to the class-II aminoacyl-tRNA synthetase family. As to quaternary structure, homodimer.

Its subcellular location is the cytoplasm. It carries out the reaction tRNA(His) + L-histidine + ATP = L-histidyl-tRNA(His) + AMP + diphosphate + H(+). The polypeptide is Histidine--tRNA ligase (Trichormus variabilis (strain ATCC 29413 / PCC 7937) (Anabaena variabilis)).